The primary structure comprises 64 residues: Ribosome biogenesis protein Nop10 (64 aa).

It belongs to the NOP10 family.

Involved in ribosome biogenesis; more specifically in 18S rRNA pseudouridylation and in cleavage of pre-rRNA. The protein is Ribosome biogenesis protein Nop10 of Ignicoccus hospitalis (strain KIN4/I / DSM 18386 / JCM 14125).